The chain runs to 444 residues: Adenylosuccinate synthetase (444 aa).

GTP-binding positions include 12–18 (GDEGKGK) and 40–42 (GHT). Aspartate 13 acts as the Proton acceptor in catalysis. The Mg(2+) site is built by aspartate 13 and glycine 40. IMP contacts are provided by residues 13–16 (DEGK), 38–41 (NAGH), threonine 128, arginine 142, glutamine 223, threonine 238, and arginine 302. The Proton donor role is filled by histidine 41. 298 to 304 (TTTGRRR) is a binding site for substrate. GTP contacts are provided by residues arginine 304, 330–332 (KLD), and 412–414 (SLG).

This sequence belongs to the adenylosuccinate synthetase family. Homodimer. Mg(2+) is required as a cofactor.

It is found in the cytoplasm. The catalysed reaction is IMP + L-aspartate + GTP = N(6)-(1,2-dicarboxyethyl)-AMP + GDP + phosphate + 2 H(+). Its pathway is purine metabolism; AMP biosynthesis via de novo pathway; AMP from IMP: step 1/2. Its function is as follows. Plays an important role in the de novo pathway of purine nucleotide biosynthesis. Catalyzes the first committed step in the biosynthesis of AMP from IMP. The sequence is that of Adenylosuccinate synthetase from Synechococcus sp. (strain ATCC 27144 / PCC 6301 / SAUG 1402/1) (Anacystis nidulans).